Here is a 254-residue protein sequence, read N- to C-terminus: MPQQIELRNIALQAAQPLVHGVSLTLKRGRVLALVGGSGSGKSLTCAATLGILPAGVRQTAGEILADGKPVSPCALRGIKIATIMQNPRSAFNPLHTMHTHARETCLALGKPADDATLTAAIEAVGLENAARVLKLYPFEMSGGMLQRMMIAMAVLCESPFIIADEPTTDLDVVAQARILDLLESIMQKQAPGMLLVTHDMGVVARLADDVAVMSDGKIVEQGDVETLFNAPKHAVTRSLVSAHLALYGMELAS.

The ABC transporter domain occupies P2–V241. G36–S43 serves as a coordination point for ATP.

The protein belongs to the ABC transporter superfamily. Nickel importer (TC 3.A.1.5.3) family. As to quaternary structure, the complex is composed of two ATP-binding proteins (NikD and NikE), two transmembrane proteins (NikB and NikC) and a solute-binding protein (NikA).

It localises to the cell inner membrane. It carries out the reaction Ni(2+)(out) + ATP + H2O = Ni(2+)(in) + ADP + phosphate + H(+). Functionally, part of the ABC transporter complex NikABCDE involved in nickel import. Responsible for energy coupling to the transport system. In Escherichia coli O157:H7, this protein is Nickel import ATP-binding protein NikD.